The sequence spans 246 residues: Dihydromethanopterin reductase (acceptor) (246 aa).

4Fe-4S ferredoxin-type domains are found at residues 150 to 178 (LPYA…VKRD) and 179 to 208 (NFVE…EGKE). [4Fe-4S] cluster contacts are provided by Cys159, Cys162, Cys165, Cys169, Cys188, Cys191, Cys194, and Cys198.

As to quaternary structure, homodimer. It depends on [4Fe-4S] cluster as a cofactor.

The enzyme catalyses 5,6,7,8-tetrahydromethanopterin + A = 7,8-dihydromethanopterin + AH2. It functions in the pathway cofactor biosynthesis; 5,6,7,8-tetrahydromethanopterin biosynthesis. Involved in the biosynthesis of tetrahydromethanopterin, a coenzyme used in methanogenesis. Catalyzes the reduction of dihydromethanopterin (H(2)MPT) to tetrahydromethanopterin (H(4)MPT). Ferredoxin may serve as an electron donor. This is Dihydromethanopterin reductase (acceptor) from Methanocaldococcus jannaschii (strain ATCC 43067 / DSM 2661 / JAL-1 / JCM 10045 / NBRC 100440) (Methanococcus jannaschii).